An 881-amino-acid chain; its full sequence is Valine--tRNA ligase (881 aa).

Positions 76 to 86 (PTVSGSLHIGH) match the 'HIGH' region motif. Positions 493–526 (DSPILPDESQLPVDPSSQAPEGYTEDQRGKPGGF) are disordered. A 'KMSKS' region motif is present at residues 608-612 (KMSKS). Lysine 611 is a binding site for ATP.

It belongs to the class-I aminoacyl-tRNA synthetase family. ValS type 2 subfamily. Monomer.

It localises to the cytoplasm. The enzyme catalyses tRNA(Val) + L-valine + ATP = L-valyl-tRNA(Val) + AMP + diphosphate. Its function is as follows. Catalyzes the attachment of valine to tRNA(Val). As ValRS can inadvertently accommodate and process structurally similar amino acids such as threonine, to avoid such errors, it has a 'posttransfer' editing activity that hydrolyzes mischarged Thr-tRNA(Val) in a tRNA-dependent manner. This is Valine--tRNA ligase from Thermobifida fusca (strain YX).